A 159-amino-acid chain; its full sequence is F1845 fimbrial protein (159 aa).

The signal sequence occupies residues methionine 1 to alanine 21.

This sequence belongs to the Dr-adhesin family.

It is found in the fimbrium. In terms of biological role, hemagglutinins of uropathogenic E.coli mediate adherence to the upper urinary tract. These adhesins bind to the Dr blood group antigen and also agglutinate human erythrocytes in the presence of D-mannose (mannose-resistant hemagglutination (MRHA)). C1845 is a strain responsible for diarrheal disease. The polypeptide is F1845 fimbrial protein (daaE) (Escherichia coli).